The primary structure comprises 134 residues: Small ribosomal subunit protein uS8c (134 aa).

It belongs to the universal ribosomal protein uS8 family. As to quaternary structure, part of the 30S ribosomal subunit.

It localises to the plastid. Its subcellular location is the chloroplast. Functionally, one of the primary rRNA binding proteins, it binds directly to 16S rRNA central domain where it helps coordinate assembly of the platform of the 30S subunit. The protein is Small ribosomal subunit protein uS8c (rps8) of Cucumis sativus (Cucumber).